We begin with the raw amino-acid sequence, 384 residues long: Acetylgalactosaminyl-O-glycosyl-glycoprotein beta-1,3-N-acetylglucosaminyltransferase (384 aa).

Residues 1–12 lie on the Cytoplasmic side of the membrane; the sequence is MAFPCRRSLTAK. Residues 13 to 31 form a helical; Signal-anchor for type II membrane protein membrane-spanning segment; the sequence is TLACLLVGVSFLALQQWFL. Residues 32 to 384 are Lumenal-facing; the sequence is QAPRSPREER…LSCDRGHRVS (353 aa). The tract at residues 34-68 is disordered; that stretch reads PRSPREERSPQEETPEGPTDAPAADEPPSELVPGP. N-linked (GlcNAc...) asparagine glycosylation is found at Asn-73, Asn-77, and Asn-196.

The protein belongs to the glycosyltransferase 31 family. In terms of tissue distribution, present in stomach and colon (at protein level). Restricted in the stomach, colon and small intestine, where core 3 structure is present.

The protein localises to the golgi apparatus membrane. It carries out the reaction a 3-O-[N-acetyl-alpha-D-galactosaminyl]-L-threonyl-[protein] + UDP-N-acetyl-alpha-D-glucosamine = a 3-O-[N-acetyl-beta-D-glucosaminyl-(1-&gt;3)-N-acetyl-alpha-D-galactosaminyl]-L-threonyl-[protein] + UDP + H(+). The catalysed reaction is a 3-O-[N-acetyl-alpha-D-galactosaminyl]-L-seryl-[protein] + UDP-N-acetyl-alpha-D-glucosamine = 3-O-[N-acetyl-beta-D-glucosaminyl-(1-&gt;3)-N-acetyl-alpha-D-galactosaminyl]-L-seryl-[protein] + UDP + H(+). It functions in the pathway protein modification; protein glycosylation. Beta-1,3-N-acetylglucosaminyltransferase that synthesizes the core 3 structure of the O-glycan, an important precursor in the biosynthesis of mucin-type glycoproteins. Plays an important role in the synthesis of mucin-type O-glycans in digestive organs. In Homo sapiens (Human), this protein is Acetylgalactosaminyl-O-glycosyl-glycoprotein beta-1,3-N-acetylglucosaminyltransferase (B3GNT6).